We begin with the raw amino-acid sequence, 149 residues long: MSGASARDATLLGFDYGEKRIGVAIGNALTRSARALVVIPNLNREHRFKAVGDLLAEWRPDALVVGLPMHPDGTPHEMTQQAKRFGNQLNGRFGLPVTWVDERYSSVEAEAGLRERNVRGRARAEMLDAEAARVILQQYLDQLSDHEHH.

Belongs to the YqgF nuclease family.

Its subcellular location is the cytoplasm. In terms of biological role, could be a nuclease involved in processing of the 5'-end of pre-16S rRNA. This chain is Putative pre-16S rRNA nuclease, found in Burkholderia ambifaria (strain MC40-6).